Consider the following 1059-residue polypeptide: Isoleucine--tRNA ligase (1059 aa).

The 'HIGH' region motif lies at 47-57; the sequence is PYTTGHIHLGT. Positions 591–595 match the 'KMSKS' region motif; sequence KMSKS. Residue Lys594 coordinates ATP.

It belongs to the class-I aminoacyl-tRNA synthetase family. IleS type 2 subfamily. In terms of assembly, monomer. Zn(2+) serves as cofactor.

Its subcellular location is the cytoplasm. It catalyses the reaction tRNA(Ile) + L-isoleucine + ATP = L-isoleucyl-tRNA(Ile) + AMP + diphosphate. Functionally, catalyzes the attachment of isoleucine to tRNA(Ile). As IleRS can inadvertently accommodate and process structurally similar amino acids such as valine, to avoid such errors it has two additional distinct tRNA(Ile)-dependent editing activities. One activity is designated as 'pretransfer' editing and involves the hydrolysis of activated Val-AMP. The other activity is designated 'posttransfer' editing and involves deacylation of mischarged Val-tRNA(Ile). The polypeptide is Isoleucine--tRNA ligase (Methanoculleus marisnigri (strain ATCC 35101 / DSM 1498 / JR1)).